The chain runs to 174 residues: Phosphopantetheine adenylyltransferase (174 aa).

T10 is a binding site for substrate. Residues 10–11 and H18 each bind ATP; that span reads TF. 3 residues coordinate substrate: K44, L76, and R90. Residues 91–93, E101, and 126–132 each bind ATP; these read GLR and HAYISSS.

The protein belongs to the bacterial CoaD family. In terms of assembly, homohexamer. Requires Mg(2+) as cofactor.

It localises to the cytoplasm. It catalyses the reaction (R)-4'-phosphopantetheine + ATP + H(+) = 3'-dephospho-CoA + diphosphate. The protein operates within cofactor biosynthesis; coenzyme A biosynthesis; CoA from (R)-pantothenate: step 4/5. Reversibly transfers an adenylyl group from ATP to 4'-phosphopantetheine, yielding dephospho-CoA (dPCoA) and pyrophosphate. This is Phosphopantetheine adenylyltransferase from Alkalilimnicola ehrlichii (strain ATCC BAA-1101 / DSM 17681 / MLHE-1).